The following is a 1428-amino-acid chain: DNA topoisomerase 2 (1428 aa).

ATP contacts are provided by residues Asn-70, Asn-99, 127 to 129, and 140 to 147; these read SSN and GRNGYGAK. Positions 333 to 336 are interaction with DNA; it reads KKKK. 365–367 lines the ATP pocket; the sequence is QTK. One can recognise a Toprim domain in the interval 443-557; that stretch reads CTLVLTEGDS…GLLDIQGFLL (115 aa). Residues Glu-449, Asp-526, and Asp-528 each contribute to the Mg(2+) site. Residues 692-1159 form the Topo IIA-type catalytic domain; that stretch reads IPNVLDGFKP…SAKDIWNTDL (468 aa). Tyr-782 functions as the O-(5'-phospho-DNA)-tyrosine intermediate in the catalytic mechanism. Positions 965-974 are interaction with DNA; the sequence is KLISPISLMN. 4 disordered regions span residues 1083 to 1102, 1176 to 1217, 1240 to 1288, and 1303 to 1428; these read KGATSDEEDEESSHEDTENV, ARGG…RKGK, KAPT…ELSK, and MGST…NEED. Thr-1086 carries the phosphothreonine; by CK2 modification. Ser-1087 carries the phosphoserine; by CK2 modification. Over residues 1207–1217 the composition is skewed to basic residues; it reads KNKKSTARKGK. Ser-1252 is subject to Phosphoserine. Thr-1258 bears the Phosphothreonine; by CK2 mark. Phosphoserine; by CK2 occurs at positions 1266, 1269, and 1272. Over residues 1275 to 1286 the composition is skewed to basic and acidic residues; the sequence is DIKKEDKDEGEL. Basic residues predominate over residues 1332 to 1347; the sequence is TAVKPKLAKKPVRKQQ. Ser-1353, Ser-1356, Ser-1408, and Ser-1423 each carry phosphoserine; by CK2. Residues 1403-1428 are compositionally biased toward acidic residues; the sequence is ELSDDSFIEDDEEENQGSDVSFNEED.

It belongs to the type II topoisomerase family. As to quaternary structure, homodimer. It depends on Mg(2+) as a cofactor. Mn(2+) serves as cofactor. Ca(2+) is required as a cofactor. In terms of processing, phosphorylation enhances the activity. Stimulates decatenation activity.

The protein localises to the nucleus. The catalysed reaction is ATP-dependent breakage, passage and rejoining of double-stranded DNA.. Functionally, control of topological states of DNA by transient breakage and subsequent rejoining of DNA strands. Topoisomerase II makes double-strand breaks. Essential during mitosis and meiosis for proper segregation of daughter chromosomes. In Saccharomyces cerevisiae (strain ATCC 204508 / S288c) (Baker's yeast), this protein is DNA topoisomerase 2 (TOP2).